We begin with the raw amino-acid sequence, 90 residues long: Putative beta-neurotoxin RjAa2f (90 aa).

Positions methionine 1–cysteine 18 are cleaved as a signal peptide. The 71-residue stretch at lysine 19–glycine 89 folds into the LCN-type CS-alpha/beta domain. Cystine bridges form between cysteine 29/cysteine 88, cysteine 33/cysteine 62, cysteine 40/cysteine 69, and cysteine 44/cysteine 71.

Belongs to the long (4 C-C) scorpion toxin superfamily. Sodium channel inhibitor family. Beta subfamily. In terms of tissue distribution, expressed by the venom gland.

It localises to the secreted. In terms of biological role, beta toxins bind voltage-independently at site-4 of sodium channels (Nav) and shift the voltage of activation toward more negative potentials thereby affecting sodium channel activation and promoting spontaneous and repetitive firing. This Rhopalurus junceus (Caribbean blue scorpion) protein is Putative beta-neurotoxin RjAa2f.